The sequence spans 139 residues: Large-conductance mechanosensitive channel (139 aa).

3 helical membrane-spanning segments follow: residues 14–34 (VVDLAVGVIIGAAFGAIVNSA), 38–58 (IFMPVIGAITGGLDFSNYYIP), and 82–102 (GQFLTLTLNFAIVAFVLFLVI).

The protein belongs to the MscL family. Homopentamer.

The protein localises to the cell inner membrane. Channel that opens in response to stretch forces in the membrane lipid bilayer. May participate in the regulation of osmotic pressure changes within the cell. The sequence is that of Large-conductance mechanosensitive channel from Methylobacterium radiotolerans (strain ATCC 27329 / DSM 1819 / JCM 2831 / NBRC 15690 / NCIMB 10815 / 0-1).